The primary structure comprises 526 residues: Exodeoxyribonuclease 7 large subunit (526 aa).

The segment at 496 to 526 (GAMTTEGGTPPAGAKKRSAKPADPTKQGSLF) is disordered.

This sequence belongs to the XseA family. Heterooligomer composed of large and small subunits.

It localises to the cytoplasm. The enzyme catalyses Exonucleolytic cleavage in either 5'- to 3'- or 3'- to 5'-direction to yield nucleoside 5'-phosphates.. In terms of biological role, bidirectionally degrades single-stranded DNA into large acid-insoluble oligonucleotides, which are then degraded further into small acid-soluble oligonucleotides. The polypeptide is Exodeoxyribonuclease 7 large subunit (Rhizobium etli (strain CIAT 652)).